We begin with the raw amino-acid sequence, 498 residues long: ATP synthase subunit beta, chloroplastic (498 aa).

172-179 (GGAGVGKT) provides a ligand contact to ATP.

Belongs to the ATPase alpha/beta chains family. F-type ATPases have 2 components, CF(1) - the catalytic core - and CF(0) - the membrane proton channel. CF(1) has five subunits: alpha(3), beta(3), gamma(1), delta(1), epsilon(1). CF(0) has four main subunits: a(1), b(1), b'(1) and c(9-12).

It localises to the plastid. It is found in the chloroplast thylakoid membrane. The catalysed reaction is ATP + H2O + 4 H(+)(in) = ADP + phosphate + 5 H(+)(out). Its function is as follows. Produces ATP from ADP in the presence of a proton gradient across the membrane. The catalytic sites are hosted primarily by the beta subunits. The chain is ATP synthase subunit beta, chloroplastic from Illicium oligandrum (Star anise).